Here is a 1073-residue protein sequence, read N- to C-terminus: Serine/threonine-protein phosphatase 6 regulatory ankyrin repeat subunit C (1073 aa).

ANK repeat units lie at residues 7–36 (TDQP…NINV), 40–69 (ERRT…NVNA), 73–102 (VWLT…DVNA), 106–135 (YWQT…TVNV), 139–168 (TGRT…SLST), 172–201 (KDRQ…DVMC), 205–234 (KGYT…EIDE), 238–267 (FGNT…NVNQ), 271–301 (KGFT…DVNF), 305–334 (EGKS…EIDC), 338–367 (YGNT…DTAR), 371–400 (HDMF…LYSI), 422–451 (LGRT…DLRR), 455–484 (FGRT…SINE), 488–544 (KGCT…DPSL), 548–578 (QGYT…CLED), 583–612 (IPVS…NLDV), 616–645 (KGRT…SALV), 650–679 (RKWT…RADI), 686–715 (HGQT…TADA), 719–748 (RGRT…FVLC), 752–781 (KGRT…STDP), 789–818 (SGYS…FAYL), 821–851 (NPFT…KIVN), 856–885 (KGRT…EVDT), 889–919 (LGRT…NITV), 923–952 (NKNT…DLGL), and 959–988 (ALQM…TVLA).

As to quaternary structure, protein phosphatase 6 (PP6) holoenzyme is proposed to be a heterotrimeric complex formed by the catalytic subunit, a SAPS domain-containing subunit (PP6R) and an ankyrin repeat-domain containing regulatory subunit (ARS).

Functionally, putative regulatory subunit of protein phosphatase 6 (PP6) that may be involved in the recognition of phosphoprotein substrates. The polypeptide is Serine/threonine-protein phosphatase 6 regulatory ankyrin repeat subunit C (ANKRD52) (Gallus gallus (Chicken)).